The chain runs to 231 residues: 7-cyano-7-deazaguanine synthase (231 aa).

8 to 18 (FSGGQDSTTCL) serves as a coordination point for ATP. Zn(2+) is bound by residues cysteine 188, cysteine 197, cysteine 200, and cysteine 203.

Belongs to the QueC family. Zn(2+) is required as a cofactor.

The enzyme catalyses 7-carboxy-7-deazaguanine + NH4(+) + ATP = 7-cyano-7-deazaguanine + ADP + phosphate + H2O + H(+). It functions in the pathway purine metabolism; 7-cyano-7-deazaguanine biosynthesis. Functionally, catalyzes the ATP-dependent conversion of 7-carboxy-7-deazaguanine (CDG) to 7-cyano-7-deazaguanine (preQ(0)). This Salmonella paratyphi A (strain ATCC 9150 / SARB42) protein is 7-cyano-7-deazaguanine synthase.